A 373-amino-acid polypeptide reads, in one-letter code: Stationary phase protein 5 (373 aa).

Its function is as follows. Required for survival at high temperature during stationary phase. This is Stationary phase protein 5 (SPG5) from Saccharomyces cerevisiae (strain ATCC 204508 / S288c) (Baker's yeast).